The chain runs to 430 residues: Serine--tRNA ligase (430 aa).

236-238 (TAE) is a binding site for L-serine. 267–269 (RRE) contacts ATP. Glu290 is a binding site for L-serine. Position 354–357 (354–357 (EISS)) interacts with ATP. Residue Ser390 participates in L-serine binding.

The protein belongs to the class-II aminoacyl-tRNA synthetase family. Type-1 seryl-tRNA synthetase subfamily. As to quaternary structure, homodimer. The tRNA molecule binds across the dimer.

Its subcellular location is the cytoplasm. The enzyme catalyses tRNA(Ser) + L-serine + ATP = L-seryl-tRNA(Ser) + AMP + diphosphate + H(+). The catalysed reaction is tRNA(Sec) + L-serine + ATP = L-seryl-tRNA(Sec) + AMP + diphosphate + H(+). It functions in the pathway aminoacyl-tRNA biosynthesis; selenocysteinyl-tRNA(Sec) biosynthesis; L-seryl-tRNA(Sec) from L-serine and tRNA(Sec): step 1/1. Catalyzes the attachment of serine to tRNA(Ser). Is also able to aminoacylate tRNA(Sec) with serine, to form the misacylated tRNA L-seryl-tRNA(Sec), which will be further converted into selenocysteinyl-tRNA(Sec). The sequence is that of Serine--tRNA ligase from Gloeothece citriformis (strain PCC 7424) (Cyanothece sp. (strain PCC 7424)).